The following is a 632-amino-acid chain: Pentatricopeptide repeat-containing protein ELI1, chloroplastic (632 aa).

The N-terminal 19 residues, 1-19 (MASSPLLATSLPQNQLSTT), are a transit peptide targeting the chloroplast. PPR repeat units lie at residues 94-128 (DLFL…EINP), 129-159 (NEFT…GLGI), 160-194 (DPYV…SLVS), 196-221 (TAMI…MCER), 222-256 (DIVS…GKPK), 258-292 (DEIT…RIRL), 293-323 (NVKV…TPRK), 324-354 (DIVA…MQGI), 360-395 (TDIT…GIKP), and 396-426 (KIEH…MNMD). Residues 431-506 (LWSSVLGSCK…EPGISTIEIE (76 aa)) are type E motif. The tract at residues 497–512 (EPGISTIEIENKVHEF) is required for function in RNA editing. The type E(+) motif stretch occupies residues 507–537 (NKVHEFRAGDREHSKSKEIYTMLRKISERIK). Positions 538 to 632 (SHGYVPNTNT…DGSCSCGDFW (95 aa)) are type DYW motif.

It belongs to the PPR family. PCMP-H subfamily. It depends on Zn(2+) as a cofactor.

It localises to the plastid. The protein resides in the chloroplast. Plays a major role in single RNA editing events in chloroplasts. Acts as a site-recognition transacting factor involved in the edition of the site 5 of ndhB1 and ndhB2 (ndhB1-5 and ndhB2-5 sites corresponding to cytidine-830), which are plastid-encoded subunits of the NADH-plastoquinone oxidoreductase. May provide the catalytic activity for editing site conversion. The protein is Pentatricopeptide repeat-containing protein ELI1, chloroplastic of Arabidopsis thaliana (Mouse-ear cress).